The following is a 366-amino-acid chain: Putative F-box protein At1g26515 (366 aa).

The tract at residues 1–20 (MKTRSKKTKTENNQEKSKEK) is disordered. Residues 8–20 (TKTENNQEKSKEK) are compositionally biased toward basic and acidic residues. One can recognise an F-box domain in the interval 20-66 (KNKFDQLPLDLEIEIFRRLPLKSVARFLTLSKSCAATIRSPSFITSF).

This chain is Putative F-box protein At1g26515, found in Arabidopsis thaliana (Mouse-ear cress).